The sequence spans 353 residues: N-formyl peptide receptor 3 (353 aa).

At 1-27 the chain is on the extracellular side; that stretch reads METNFSIPLNETEEVLPEPAGHTVLWI. 2 N-linked (GlcNAc...) asparagine glycosylation sites follow: N4 and N10. Residues 28-50 traverse the membrane as a helical segment; that stretch reads FSLLVHGVTFVFGVLGNGLVIWV. The Cytoplasmic segment spans residues 51–61; the sequence is AGFRMTRTVNT. A helical transmembrane segment spans residues 62–83; sequence ICYLNLALADFSFSAILPFRMV. The Extracellular portion of the chain corresponds to 84-100; it reads SVAMREKWPFGSFLCKL. An intrachain disulfide couples C98 to C176. Residues 101 to 121 form a helical membrane-spanning segment; that stretch reads VHVMIDINLFVSVYLITIIAL. Residues 122–140 are Cytoplasmic-facing; sequence DRCICVLHPAWAQNHRTMS. The chain crosses the membrane as a helical span at residues 141–162; it reads LAKRVMTGLWIFTIVLTLPNFI. Over 163–205 the chain is Extracellular; it reads FWTTISTTNGDTYCIFNFAFWGDTAVERLNVFITMAKVFLILH. A helical membrane pass occupies residues 206–226; the sequence is FIIGFSVPMSIITVCYGIIAA. Over 227–242 the chain is Cytoplasmic; sequence KIHRNHMIKSSRPLRV. The helical transmembrane segment at 243 to 266 threads the bilayer; it reads FAAVVASFFICWFPYELIGILMAV. Residues 267–286 are Extracellular-facing; the sequence is WLKEMLLNGKYKIILVLINP. The helical transmembrane segment at 287-306 threads the bilayer; sequence TSSLAFFNSCLNPILYVFMG. Residues 307–353 are Cytoplasmic-facing; that stretch reads RNFQERLIRSLPTSLERALTEVPDSAQTSNTDTTSASPPEETELQAM. A disordered region spans residues 327-353; that stretch reads EVPDSAQTSNTDTTSASPPEETELQAM. The segment covering 331–343 has biased composition (polar residues); sequence SAQTSNTDTTSAS.

Belongs to the G-protein coupled receptor 1 family. Detected in various tissues with highest expression in lung.

Its subcellular location is the cell membrane. Its function is as follows. Low affinity receptor for N-formyl-methionyl peptides, which are powerful neutrophils chemotactic factors. Binding of FMLP to the receptor causes activation of neutrophils. This response is mediated via a G-protein that activates a phosphatidylinositol-calcium second messenger system. Acts as a receptor for humanin. The chain is N-formyl peptide receptor 3 (FPR3) from Homo sapiens (Human).